A 539-amino-acid polypeptide reads, in one-letter code: AT-rich interactive domain-containing protein 3A (539 aa).

The tract at residues 1-190 (MKLQAVMETL…PLSGHPQLQD (190 aa)) is disordered. The segment covering 55-73 (LKIQRAQAAALAAMRAAAA) has biased composition (low complexity). Acidic residues predominate over residues 84 to 100 (SEEEDGESMASDEEDEK). Over residues 101–110 (ERDGESERYQ) the composition is skewed to basic and acidic residues. Over residues 113–141 (ASEEEDLKGKWDEDDFEDEGEDEYEDMEE) the composition is skewed to acidic residues. The segment covering 161–173 (HSSQQAFPSQRSQ) has biased composition (polar residues). Residues 209-301 (DPKRKEFLDD…YLYPYECEKR (93 aa)) enclose the ARID domain. The 96-residue stretch at 404 to 499 (AALEQLREKL…GVLFAQPPTS (96 aa)) folds into the REKLES domain. Positions 405 to 448 (ALEQLREKLESGEPPEKKMALGSEEQQRIIQRTIQHNLLAMTAQ) are important for nuclear localization. A homodimerization region spans residues 450–471 (PMNIRINSQAEGRQDSAVNLTT). Residues 495 to 502 (QPPTSASG) are important for cytoplasmic localization. The span at 497–512 (PTSASGTSKGSSNRTG) shows a compositional bias: polar residues. Residues 497–539 (PTSASGTSKGSSNRTGSIGGGSSNSQAAPPSTPSAPNSNNPSP) form a disordered region. Residues 519–539 (SNSQAAPPSTPSAPNSNNPSP) are compositionally biased toward low complexity.

In terms of assembly, homodimer.

It is found in the nucleus. The protein localises to the cytoplasm. In terms of biological role, transcription factor required for smad1 and smad2-mediated responses to TGFbeta during mesoderm induction. This is AT-rich interactive domain-containing protein 3A (arid3a) from Xenopus laevis (African clawed frog).